The chain runs to 175 residues: ATP synthase subunit b (175 aa).

The chain crosses the membrane as a helical span at residues 20 to 40; that stretch reads LIFWTAVTFVIVLVILKKIAW.

The protein belongs to the ATPase B chain family. F-type ATPases have 2 components, F(1) - the catalytic core - and F(0) - the membrane proton channel. F(1) has five subunits: alpha(3), beta(3), gamma(1), delta(1), epsilon(1). F(0) has four main subunits: a(1), b(2) and c(10-14). The alpha and beta chains form an alternating ring which encloses part of the gamma chain. F(1) is attached to F(0) by a central stalk formed by the gamma and epsilon chains, while a peripheral stalk is formed by the delta and b chains.

It is found in the cell inner membrane. Functionally, f(1)F(0) ATP synthase produces ATP from ADP in the presence of a proton or sodium gradient. F-type ATPases consist of two structural domains, F(1) containing the extramembraneous catalytic core and F(0) containing the membrane proton channel, linked together by a central stalk and a peripheral stalk. During catalysis, ATP synthesis in the catalytic domain of F(1) is coupled via a rotary mechanism of the central stalk subunits to proton translocation. Its function is as follows. Component of the F(0) channel, it forms part of the peripheral stalk, linking F(1) to F(0). The sequence is that of ATP synthase subunit b from Chlorobaculum parvum (strain DSM 263 / NCIMB 8327) (Chlorobium vibrioforme subsp. thiosulfatophilum).